Reading from the N-terminus, the 422-residue chain is Beta-1,3-galactosyltransferase 2 (422 aa).

Topologically, residues 1–24 (MLQWRRRHCCFAKMTWNAKRSLFR) are cytoplasmic. Residues 25–45 (THLIGVLSLVFLFAMFLFFNH) traverse the membrane as a helical; Signal-anchor for type II membrane protein segment. Residues 46–422 (HDWLPGRAGF…AGRYRHRKLH (377 aa)) are Lumenal-facing. Residues N75, N100, N119, N176, and N226 are each glycosylated (N-linked (GlcNAc...) asparagine). The interval 90–110 (TLRPQTATNSNNTDLSPQGVT) is disordered.

This sequence belongs to the glycosyltransferase 31 family. Requires Mn(2+) as cofactor.

Its subcellular location is the golgi apparatus membrane. The catalysed reaction is an N-acetyl-beta-D-glucosaminyl derivative + UDP-alpha-D-galactose = a beta-D-galactosyl-(1-&gt;3)-N-acetyl-beta-D-glucosaminyl derivative + UDP + H(+). It carries out the reaction a beta-D-GlcNAc-(1-&gt;3)-beta-D-Gal-(1-&gt;4)-beta-D-Glc-(1&lt;-&gt;1)-Cer(d18:1(4E)) + UDP-alpha-D-galactose = a beta-D-Gal-(1-&gt;3)-beta-D-GlcNAc-(1-&gt;3)-beta-D-Gal-(1-&gt;4)-beta-D-Glc-(1&lt;-&gt;1')-Cer(d18:1(4E)) + UDP + H(+). It catalyses the reaction a neolactoside IV(3)-beta-GlcNAc-nLc4Cer(d18:1(4E)) + UDP-alpha-D-galactose = a neolactoside IV(3)-beta-[Gal-beta-(1-&gt;3)-GlcNAc]-nLc4Cer(d18:1(4E)) + UDP + H(+). It participates in protein modification; protein glycosylation. In terms of biological role, beta-1,3-galactosyltransferase that transfers galactose from UDP-galactose to substrates with a terminal beta-N-acetylglucosamine (beta-GlcNAc) residue. Can also utilize substrates with a terminal galactose residue, albeit with lower efficiency. Involved in the biosynthesis of the carbohydrate moieties of glycolipids and glycoproteins. Inactive towards substrates with terminal alpha-N-acetylglucosamine (alpha-GlcNAc) or alpha-N-acetylgalactosamine (alpha-GalNAc) residues. This Pongo abelii (Sumatran orangutan) protein is Beta-1,3-galactosyltransferase 2 (B3GALT2).